Consider the following 325-residue polypeptide: VSG expression site-associated protein 117A (325 aa).

Positions 1–23 (MKVTIVELVVWLFSVNFFVVVAE) are cleaved as a signal peptide. N72, N290, and N313 each carry an N-linked (GlcNAc...) asparagine glycan.

Functionally, not known but may be related to activation of the variant surface glycoprotein genes. The protein is VSG expression site-associated protein 117A of Trypanosoma brucei brucei.